Consider the following 246-residue polypeptide: Ly6/PLAUR domain-containing protein 4 (246 aa).

The N-terminal stretch at 1 to 26 (MGPQHLSPMQLLCLLGAISSLPWAEA) is a signal peptide. Asn-117 carries an N-linked (GlcNAc...) asparagine glycan. Residues 142 to 223 (CPTCVGEHSK…INIVEKALFT (82 aa)) form the UPAR/Ly6 domain. Ala-225 carries GPI-anchor amidated alanine lipidation. Positions 226–246 (GTPCRSPSWGILLGLLFAFKG) are cleaved as a propeptide — removed in mature form.

Its subcellular location is the cell membrane. This is Ly6/PLAUR domain-containing protein 4 (LYPD4) from Bos taurus (Bovine).